A 97-amino-acid chain; its full sequence is MSSAPEPPAFKKEPPKEKDLGNIGLRGVRTTTLFRAVNPELFIKPNKPVMAFGLITISLCVAYIGYLHATQENKKDLYEAIDSEGHSYMRRKTSKWD.

The interval 1-22 is disordered; the sequence is MSSAPEPPAFKKEPPKEKDLGN. Over residues 9-20 the composition is skewed to basic and acidic residues; it reads AFKKEPPKEKDL. The chain crosses the membrane as a helical span at residues 48-70; the sequence is PVMAFGLITISLCVAYIGYLHAT.

The protein belongs to the SMIM8 family.

The protein resides in the membrane. The polypeptide is Small integral membrane protein 8 (SMIM8) (Bos taurus (Bovine)).